The following is a 463-amino-acid chain: Fumarate hydratase class II (463 aa).

Substrate-binding positions include 97 to 99 (SGT), 128 to 131 (HPND), 138 to 140 (SSN), and threonine 186. The active-site Proton donor/acceptor is the histidine 187. Serine 317 is a catalytic residue. Residues serine 318 and 323–325 (KVN) each bind substrate.

The protein belongs to the class-II fumarase/aspartase family. Fumarase subfamily. Homotetramer.

It is found in the cytoplasm. It carries out the reaction (S)-malate = fumarate + H2O. The protein operates within carbohydrate metabolism; tricarboxylic acid cycle; (S)-malate from fumarate: step 1/1. Its function is as follows. Involved in the TCA cycle. Catalyzes the stereospecific interconversion of fumarate to L-malate. This chain is Fumarate hydratase class II, found in Helicobacter pylori (strain ATCC 700392 / 26695) (Campylobacter pylori).